A 202-amino-acid chain; its full sequence is MIGRLRGSLAEKQPPHLVLDVNGVGYELEVPMTTLYRLPHVGETVTLHTHLVVREDAHLLYGFYEKRERELFRELIRLNGVGPKLALALMSGLEVDELVRCVQAQDTSALTRIPGVGKKTAERLLVELKDRFKAWESLPGTFTLVSNGPNQAEPVASAESDAVSALISLGYKPQEASKAVSAIKEKDLSSADLIRRALKGMG.

Positions 1-64 (MIGRLRGSLA…EDAHLLYGFY (64 aa)) are domain I. A domain II region spans residues 65–143 (EKRERELFRE…AWESLPGTFT (79 aa)). The interval 144-153 (LVSNGPNQAE) is flexible linker. Residues 154-202 (PVASAESDAVSALISLGYKPQEASKAVSAIKEKDLSSADLIRRALKGMG) form a domain III region.

Belongs to the RuvA family. In terms of assembly, homotetramer. Forms an RuvA(8)-RuvB(12)-Holliday junction (HJ) complex. HJ DNA is sandwiched between 2 RuvA tetramers; dsDNA enters through RuvA and exits via RuvB. An RuvB hexamer assembles on each DNA strand where it exits the tetramer. Each RuvB hexamer is contacted by two RuvA subunits (via domain III) on 2 adjacent RuvB subunits; this complex drives branch migration. In the full resolvosome a probable DNA-RuvA(4)-RuvB(12)-RuvC(2) complex forms which resolves the HJ.

Its subcellular location is the cytoplasm. In terms of biological role, the RuvA-RuvB-RuvC complex processes Holliday junction (HJ) DNA during genetic recombination and DNA repair, while the RuvA-RuvB complex plays an important role in the rescue of blocked DNA replication forks via replication fork reversal (RFR). RuvA specifically binds to HJ cruciform DNA, conferring on it an open structure. The RuvB hexamer acts as an ATP-dependent pump, pulling dsDNA into and through the RuvAB complex. HJ branch migration allows RuvC to scan DNA until it finds its consensus sequence, where it cleaves and resolves the cruciform DNA. The chain is Holliday junction branch migration complex subunit RuvA from Pseudomonas savastanoi pv. phaseolicola (strain 1448A / Race 6) (Pseudomonas syringae pv. phaseolicola (strain 1448A / Race 6)).